The following is a 360-amino-acid chain: GTP 3',8-cyclase (360 aa).

One can recognise a Radical SAM core domain in the interval 33–251; it reads RFGRSATDLR…LQPHFRLRPD (219 aa). Arg-42 lines the GTP pocket. Cys-49 and Cys-53 together coordinate [4Fe-4S] cluster. Tyr-55 serves as a coordination point for S-adenosyl-L-methionine. Position 56 (Cys-56) interacts with [4Fe-4S] cluster. Arg-93 provides a ligand contact to GTP. Gly-97 contacts S-adenosyl-L-methionine. Thr-124 lines the GTP pocket. Residue Ser-148 participates in S-adenosyl-L-methionine binding. Lys-185 is a GTP binding site. Residue Met-219 participates in S-adenosyl-L-methionine binding. 2 residues coordinate [4Fe-4S] cluster: Cys-287 and Cys-290. 292–294 contributes to the GTP binding site; the sequence is RTR. Residue Cys-304 coordinates [4Fe-4S] cluster.

It belongs to the radical SAM superfamily. MoaA family. Monomer and homodimer. [4Fe-4S] cluster serves as cofactor.

The catalysed reaction is GTP + AH2 + S-adenosyl-L-methionine = (8S)-3',8-cyclo-7,8-dihydroguanosine 5'-triphosphate + 5'-deoxyadenosine + L-methionine + A + H(+). It participates in cofactor biosynthesis; molybdopterin biosynthesis. Its function is as follows. Catalyzes the cyclization of GTP to (8S)-3',8-cyclo-7,8-dihydroguanosine 5'-triphosphate. The protein is GTP 3',8-cyclase of Mycobacterium marinum (strain ATCC BAA-535 / M).